A 118-amino-acid chain; its full sequence is Ribonuclease P protein component (118 aa).

The protein belongs to the RnpA family. As to quaternary structure, consists of a catalytic RNA component (M1 or rnpB) and a protein subunit.

The catalysed reaction is Endonucleolytic cleavage of RNA, removing 5'-extranucleotides from tRNA precursor.. Its function is as follows. RNaseP catalyzes the removal of the 5'-leader sequence from pre-tRNA to produce the mature 5'-terminus. It can also cleave other RNA substrates such as 4.5S RNA. The protein component plays an auxiliary but essential role in vivo by binding to the 5'-leader sequence and broadening the substrate specificity of the ribozyme. In Mycoplasma pneumoniae (strain ATCC 29342 / M129 / Subtype 1) (Mycoplasmoides pneumoniae), this protein is Ribonuclease P protein component.